A 282-amino-acid polypeptide reads, in one-letter code: 4-hydroxy-3-methylbut-2-enyl diphosphate reductase (282 aa).

Cysteine 12 lines the [4Fe-4S] cluster pocket. Positions 40 and 72 each coordinate (2E)-4-hydroxy-3-methylbut-2-enyl diphosphate. Residues histidine 40 and histidine 72 each coordinate dimethylallyl diphosphate. Positions 40 and 72 each coordinate isopentenyl diphosphate. Residue cysteine 94 participates in [4Fe-4S] cluster binding. Histidine 122 contributes to the (2E)-4-hydroxy-3-methylbut-2-enyl diphosphate binding site. Residue histidine 122 participates in dimethylallyl diphosphate binding. An isopentenyl diphosphate-binding site is contributed by histidine 122. Glutamate 124 serves as the catalytic Proton donor. (2E)-4-hydroxy-3-methylbut-2-enyl diphosphate is bound at residue threonine 160. Cysteine 188 provides a ligand contact to [4Fe-4S] cluster. Serine 216, asparagine 218, and serine 260 together coordinate (2E)-4-hydroxy-3-methylbut-2-enyl diphosphate. Positions 216, 218, and 260 each coordinate dimethylallyl diphosphate. The isopentenyl diphosphate site is built by serine 216, asparagine 218, and serine 260.

It belongs to the IspH family. [4Fe-4S] cluster serves as cofactor.

It carries out the reaction isopentenyl diphosphate + 2 oxidized [2Fe-2S]-[ferredoxin] + H2O = (2E)-4-hydroxy-3-methylbut-2-enyl diphosphate + 2 reduced [2Fe-2S]-[ferredoxin] + 2 H(+). It catalyses the reaction dimethylallyl diphosphate + 2 oxidized [2Fe-2S]-[ferredoxin] + H2O = (2E)-4-hydroxy-3-methylbut-2-enyl diphosphate + 2 reduced [2Fe-2S]-[ferredoxin] + 2 H(+). The protein operates within isoprenoid biosynthesis; dimethylallyl diphosphate biosynthesis; dimethylallyl diphosphate from (2E)-4-hydroxy-3-methylbutenyl diphosphate: step 1/1. It functions in the pathway isoprenoid biosynthesis; isopentenyl diphosphate biosynthesis via DXP pathway; isopentenyl diphosphate from 1-deoxy-D-xylulose 5-phosphate: step 6/6. In terms of biological role, catalyzes the conversion of 1-hydroxy-2-methyl-2-(E)-butenyl 4-diphosphate (HMBPP) into a mixture of isopentenyl diphosphate (IPP) and dimethylallyl diphosphate (DMAPP). Acts in the terminal step of the DOXP/MEP pathway for isoprenoid precursor biosynthesis. In Geotalea daltonii (strain DSM 22248 / JCM 15807 / FRC-32) (Geobacter daltonii), this protein is 4-hydroxy-3-methylbut-2-enyl diphosphate reductase.